The following is a 79-amino-acid chain: Conotoxin MIVA (79 aa).

The first 21 residues, 1–21 (MGMRMMFTVFLLVVLATTVVS), serve as a signal peptide directing secretion. A propeptide spanning residues 22-38 (IPSDRASDGRNAVVHER) is cleaved from the precursor. Pro-40 carries the post-translational modification 4-hydroxyproline. Glu-41 is modified (4-carboxyglutamate). Residues Thr-45 and Thr-47 are each glycosylated (O-linked (HexNAc...) threonine). 4-hydroxyproline occurs at positions 55, 60, 61, 69, 70, and 74. Proline amide is present on Pro-74. The propeptide occupies 75–79 (GRRND).

Post-translationally, O-linked glycan consists of Hex4-HexNAc2 hexasaccharide. Contains 3 disulfide bonds. Expressed by the venom duct.

It localises to the secreted. Its function is as follows. Probable neurotoxin with ion channel inhibitor activity. The polypeptide is Conotoxin MIVA (Conus magus (Magical cone)).